Here is a 155-residue protein sequence, read N- to C-terminus: Putative methyl-CpG-binding domain protein 12 (155 aa).

Residues 1–53 form a CW-type zinc finger; it reads MVQCTDCKKWRLIPSMQHYNIIKETQLQTPFVCGTTSGWTPNMSCNVPQDGTT. Positions 3-45 match the MBD-associated domain (MAD) motif; that stretch reads QCTDCKKWRLIPSMQHYNIIKETQLQTPFVCGTTSGWTPNMSC. Zn(2+)-binding residues include C4, C7, C33, and C45. One can recognise an MBD domain in the interval 53-126; that stretch reads TCDTWPSIPP…SQFSFQIPKP (74 aa). The interval 130–155 is disordered; that stretch reads NYVKKRTRPVKRRKSSKDNNCEKGKK. A compositionally biased stretch (basic residues) spans 133-144; that stretch reads KKRTRPVKRRKS. The short motif at 140–147 is the Nuclear localization signal element; the sequence is KRRKSSKD. The span at 145–155 shows a compositional bias: basic and acidic residues; that stretch reads SKDNNCEKGKK.

Its subcellular location is the nucleus. In terms of biological role, probable transcriptional regulator. The polypeptide is Putative methyl-CpG-binding domain protein 12 (MBD12) (Arabidopsis thaliana (Mouse-ear cress)).